The following is a 388-amino-acid chain: Chorismate synthase (388 aa).

R39 and R45 together coordinate NADP(+). Residues 130 to 132, 251 to 252, G296, 311 to 315, and R337 each bind FMN; these read RSS, NA, and KPIPT.

Belongs to the chorismate synthase family. As to quaternary structure, homotetramer. FMNH2 serves as cofactor.

It catalyses the reaction 5-O-(1-carboxyvinyl)-3-phosphoshikimate = chorismate + phosphate. Its pathway is metabolic intermediate biosynthesis; chorismate biosynthesis; chorismate from D-erythrose 4-phosphate and phosphoenolpyruvate: step 7/7. Functionally, catalyzes the anti-1,4-elimination of the C-3 phosphate and the C-6 proR hydrogen from 5-enolpyruvylshikimate-3-phosphate (EPSP) to yield chorismate, which is the branch point compound that serves as the starting substrate for the three terminal pathways of aromatic amino acid biosynthesis. This reaction introduces a second double bond into the aromatic ring system. This chain is Chorismate synthase, found in Streptococcus agalactiae serotype III (strain NEM316).